Reading from the N-terminus, the 802-residue chain is Acetyl-CoA decarbonylase/synthase complex subunit alpha (802 aa).

Residues Cys-69, Cys-72, Cys-73, Cys-75, Cys-80, and Cys-90 each contribute to the [4Fe-4S] cluster site. His-113 contacts CO. [Ni-4Fe-4S] cluster is bound by residues His-246, Cys-274, and Cys-319. 4Fe-4S ferredoxin-type domains are found at residues 404-432 (EELK…ISEA) and 442-473 (SKFE…VIEK). Residues Cys-413, Cys-416, Cys-419, Cys-423, Cys-451, Cys-454, Cys-457, and Cys-461 each contribute to the [4Fe-4S] cluster site. The [Ni-4Fe-4S] cluster site is built by Cys-519, Cys-548, and Cys-583.

It belongs to the Ni-containing carbon monoxide dehydrogenase family. In terms of assembly, heterotetramer of two alpha and two epsilon subunits. The ACDS complex is made up of alpha, epsilon, beta, gamma and delta subunits with a probable stoichiometry of (alpha(2)epsilon(2))(4)-beta(8)-(gamma(1)delta(1))(8). The cofactor is [4Fe-4S] cluster. [Ni-4Fe-4S] cluster is required as a cofactor.

It catalyses the reaction CO + 2 oxidized [2Fe-2S]-[ferredoxin] + H2O = 2 reduced [2Fe-2S]-[ferredoxin] + CO2 + 2 H(+). It participates in one-carbon metabolism; methanogenesis from acetate. Part of the ACDS complex that catalyzes the reversible cleavage of acetyl-CoA, allowing growth on acetate as sole source of carbon and energy. The alpha-epsilon subcomponent functions as a carbon monoxide dehydrogenase. The polypeptide is Acetyl-CoA decarbonylase/synthase complex subunit alpha (Methanococcoides burtonii (strain DSM 6242 / NBRC 107633 / OCM 468 / ACE-M)).